Here is a 159-residue protein sequence, read N- to C-terminus: MFSGIKGPNPSDLKGPELRILIVHARWNLQAIEPLVKGAVETMIEKHDVKLENIDIESVPGSWELPQGIRASIARNTYDAVIGIGVLIKGSTMHFEYISEAVVHGLMRVGLDSGVPVILGLLTVLNEEQALYRAGLNGGHNHGNDWGSAAVEMGLKALY.

Residues Trp-27, 62 to 64, and 86 to 88 each bind 5-amino-6-(D-ribitylamino)uracil; these read SWE and VLI. Position 91-92 (91-92) interacts with (2S)-2-hydroxy-3-oxobutyl phosphate; that stretch reads ST. His-94 (proton donor) is an active-site residue. Leu-119 contacts 5-amino-6-(D-ribitylamino)uracil. A (2S)-2-hydroxy-3-oxobutyl phosphate-binding site is contributed by Arg-133.

As to quaternary structure, homopentamer.

It carries out the reaction (2S)-2-hydroxy-3-oxobutyl phosphate + 5-amino-6-(D-ribitylamino)uracil = 6,7-dimethyl-8-(1-D-ribityl)lumazine + phosphate + 2 H2O + H(+). Its pathway is cofactor biosynthesis; riboflavin biosynthesis; riboflavin from 2-hydroxy-3-oxobutyl phosphate and 5-amino-6-(D-ribitylamino)uracil: step 1/2. With respect to regulation, competitively inhibited by riboflavin (Ki of 17 uM). Its function is as follows. Catalyzes the formation of 6,7-dimethyl-8-ribityllumazine by condensation of 5-amino-6-(D-ribitylamino)uracil with 3,4-dihydroxy-2-butanone 4-phosphate. This is the penultimate step in the biosynthesis of riboflavin. Also binds riboflavin with an unexpected high affinity. This chain is 6,7-dimethyl-8-ribityllumazine synthase (rib4), found in Schizosaccharomyces pombe (strain 972 / ATCC 24843) (Fission yeast).